Here is an 85-residue protein sequence, read N- to C-terminus: U4-theraphotoxin-Hhn1r (85 aa).

An N-terminal signal peptide occupies residues 1–22 (MKVTLIAILTCAAVLVLHTTAA). A propeptide spanning residues 23-48 (EELEAESQLMEVGMPDTELAAVDEER) is cleaved from the precursor. Intrachain disulfides connect Cys52/Cys66, Cys56/Cys77, and Cys71/Cys82.

This sequence belongs to the neurotoxin 12 (Hwtx-2) family. 02 (Hwtx-2) subfamily. In terms of tissue distribution, expressed by the venom gland.

Its subcellular location is the secreted. In terms of biological role, postsynaptic neurotoxin. This chain is U4-theraphotoxin-Hhn1r, found in Cyriopagopus hainanus (Chinese bird spider).